Reading from the N-terminus, the 221-residue chain is Phosphoribosylformylglycinamidine synthase subunit PurQ (221 aa).

One can recognise a Glutamine amidotransferase type-1 domain in the interval 3 to 221; it reads AAVLVFPGSN…MFASLMQVMA (219 aa). Residue Cys87 is the Nucleophile of the active site. Active-site residues include His195 and Glu197.

As to quaternary structure, part of the FGAM synthase complex composed of 1 PurL, 1 PurQ and 2 PurS subunits.

Its subcellular location is the cytoplasm. It catalyses the reaction N(2)-formyl-N(1)-(5-phospho-beta-D-ribosyl)glycinamide + L-glutamine + ATP + H2O = 2-formamido-N(1)-(5-O-phospho-beta-D-ribosyl)acetamidine + L-glutamate + ADP + phosphate + H(+). The catalysed reaction is L-glutamine + H2O = L-glutamate + NH4(+). It participates in purine metabolism; IMP biosynthesis via de novo pathway; 5-amino-1-(5-phospho-D-ribosyl)imidazole from N(2)-formyl-N(1)-(5-phospho-D-ribosyl)glycinamide: step 1/2. Part of the phosphoribosylformylglycinamidine synthase complex involved in the purines biosynthetic pathway. Catalyzes the ATP-dependent conversion of formylglycinamide ribonucleotide (FGAR) and glutamine to yield formylglycinamidine ribonucleotide (FGAM) and glutamate. The FGAM synthase complex is composed of three subunits. PurQ produces an ammonia molecule by converting glutamine to glutamate. PurL transfers the ammonia molecule to FGAR to form FGAM in an ATP-dependent manner. PurS interacts with PurQ and PurL and is thought to assist in the transfer of the ammonia molecule from PurQ to PurL. This chain is Phosphoribosylformylglycinamidine synthase subunit PurQ, found in Zymomonas mobilis subsp. mobilis (strain ATCC 31821 / ZM4 / CP4).